Here is a 450-residue protein sequence, read N- to C-terminus: Zinc metalloproteinase nas-13 (450 aa).

A signal peptide spans 1–31; the sequence is MPSPTSSSASVFSSHLFFVFCIFSQIAQSYA. The N-linked (GlcNAc...) asparagine glycan is linked to N68. The 194-residue stretch at 110 to 303 folds into the Peptidase M12A domain; that stretch reads NAVRQTYLKW…YKINMLYNCP (194 aa). Cystine bridges form between C152–C302 and C174–C193. Zn(2+) is bound at residue H201. Residue E202 is part of the active site. Residues H205 and H211 each coordinate Zn(2+). N225 is a glycosylation site (N-linked (GlcNAc...) asparagine). Positions 349-351 match the Cell attachment site motif; that stretch reads RGD. Cystine bridges form between C368–C404, C375–C397, C384–C401, C414–C450, C421–C443, and C430–C447. ShKT domains follow at residues 368–404 and 414–450; these read CEDR…CGKC and CEDA…CNFC. Residue N431 is glycosylated (N-linked (GlcNAc...) asparagine).

Zn(2+) serves as cofactor.

It localises to the secreted. Functionally, metalloprotease. This is Zinc metalloproteinase nas-13 (nas-13) from Caenorhabditis elegans.